The sequence spans 111 residues: Universal stress protein B (111 aa).

A run of 2 helical transmembrane segments spans residues 1 to 21 (MIST…NMAR) and 90 to 110 (FILT…LMLW).

This sequence belongs to the universal stress protein B family.

The protein resides in the cell inner membrane. This is Universal stress protein B from Yersinia pseudotuberculosis serotype O:1b (strain IP 31758).